The chain runs to 853 residues: Trimethylguanosine synthase (853 aa).

Positions N54–D84 are disordered. The residue at position 61 (T61) is a Phosphothreonine. Positions S69–E80 are enriched in polar residues. Residues S81, S85, S92, and S139 each carry the phosphoserine modification. At Y144 the chain carries Phosphotyrosine. The residue at position 152 (S152) is a Phosphoserine. 2 disordered regions span residues V328 to G437 and E523 to S549. A compositionally biased stretch (basic and acidic residues) spans K365–Q383. S405 and S431 each carry phosphoserine. Positions D424–D435 are enriched in acidic residues. Over residues Q526–S541 the composition is skewed to polar residues. Position 572 is a phosphoserine (S572). The tract at residues C594–I623 is disordered. Basic residues predominate over residues K612–K621. S-adenosyl-L-methionine is bound at residue D711.

It belongs to the methyltransferase superfamily. Trimethylguanosine synthase family. In terms of assembly, may form homooligomers. Interacts with CREBBP/CBP, EED/WAIT1, EP300/P300, NCOA6/PRIP, PPARBP/PBP and SMN. In terms of tissue distribution, ubiquitously expressed.

It localises to the cytoplasm. Its subcellular location is the nucleus. The protein localises to the cajal body. The protein resides in the nucleolus. The catalysed reaction is a 5'-end (N(7)-methyl 5'-triphosphoguanosine)-ribonucleoside in snRNA + S-adenosyl-L-methionine = a 5'-end (N(2),N(7)-dimethyl 5'-triphosphoguanosine)-ribonucleoside in snRNA + S-adenosyl-L-homocysteine + H(+). It carries out the reaction a 5'-end (N(7)-methyl 5'-triphosphoguanosine)-ribonucleoside in snoRNA + S-adenosyl-L-methionine = a 5'-end (N(2),N(7)-dimethyl 5'-triphosphoguanosine)-ribonucleoside in snoRNA + S-adenosyl-L-homocysteine + H(+). The enzyme catalyses a 5'-end (N(2),N(7)-dimethyl 5'-triphosphoguanosine)-ribonucleoside in snRNA + S-adenosyl-L-methionine = a 5'-end (N(2),N(2),N(7)-trimethyl 5'-triphosphoguanosine)-ribonucleoside in snRNA + S-adenosyl-L-homocysteine + H(+). It catalyses the reaction a 5'-end (N(2),N(7)-dimethyl 5'-triphosphoguanosine)-ribonucleoside in snoRNA + S-adenosyl-L-methionine = a 5'-end (N(2),N(2),N(7)-trimethyl 5'-triphosphoguanosine)-ribonucleoside in snoRNA + S-adenosyl-L-homocysteine + H(+). In terms of biological role, catalyzes the 2 serial methylation steps for the conversion of the 7-monomethylguanosine (m(7)G) caps of snRNAs and snoRNAs to a 2,2,7-trimethylguanosine (m(2,2,7)G) cap structure. The enzyme is specific for guanine, and N7 methylation must precede N2 methylation. Hypermethylation of the m7G cap of U snRNAs leads to their concentration in nuclear foci, their colocalization with coilin and the formation of canonical Cajal bodies (CBs). Plays a role in transcriptional regulation. The polypeptide is Trimethylguanosine synthase (Tgs1) (Mus musculus (Mouse)).